Consider the following 178-residue polypeptide: Methyltransferase flvH (178 aa).

The Post-SET domain occupies 120–136 (QPFNCFCGSQNCLGLIA). The Zn(2+) site is built by cysteine 124, cysteine 126, and cysteine 131.

Belongs to the class V-like SAM-binding methyltransferase superfamily.

The enzyme catalyses L-lysine + 2 S-adenosyl-L-methionine = N(6),N(6)-dimethyl-L-lysine + 2 S-adenosyl-L-homocysteine + 2 H(+). It functions in the pathway secondary metabolite biosynthesis; terpenoid biosynthesis. Its function is as follows. Methyltransferase; part of the gene cluster that mediates the biosynthesis of flavunoidine, an alkaloidal terpenoid with a tetracyclic cage-like core connected to dimethylcadaverine via a C-N bond and acylated with 5,5-dimethyl-L-pipecolate. The tetracyclic core is synthesized by the terpene cyclase flvE and the cytochrome P450 monooxygenase flvD. The terpene cyclase flvE catalyzes the cyclization of farnesyl pyrophosphate (FPP) to form (1R,4R,5S)-(+)-acoradiene and the cytochrome P450 monooxygenase flvD is then responsible for oxidative conversion of (1R,4R,5S)-(+)-acoradiene into the tetracyclic cage present in the final product flavunoidine. In parallel, the N-methyltransferase flvH dimethylates L-lysine to give N,N-dimethyl-L-Lysin which is decarboxylated by flvG to afford dimethylcadaverine. The terpene cyclase-like protein flvF is the enzyme that attaches the dimethylcadaverine precusor at the C-7 of the tetracyclic cage to yield pre-flavunoidine. The cytochrome monooxygenase flvC hydroxylates the C-10 position of pre-flavunoidine whereas the NRPS flvI acylates the terpenoid core at the hydroxylated C-10 with dimethylpipecolate to yield final flavunoidine. The bifunctional enzyme flvA and the dehydrogenase flvB are responsible for the synthesis of the dimethylpipecolate precursor. The PLP-dependent lyase domain of flvA might use L-O-acetyl-homoserine and alpha-keto-isovalerate to form an intermediary ketone that can cyclize intramolecularly to yield an imine. The imine can be reduced by flvB to yield the 6-carboxylated pipecolate. The C-terminal alpha-KG-dependent oxygenase domain of flvA is then proposed to catalyze the decarboxylation to yield dimethylpipecolate. This is Methyltransferase flvH from Aspergillus flavus (strain ATCC 200026 / FGSC A1120 / IAM 13836 / NRRL 3357 / JCM 12722 / SRRC 167).